A 465-amino-acid chain; its full sequence is Fumarate hydratase class II (465 aa).

Residues 99–101 (SGT), Arg127, 130–133 (HPND), 140–142 (STN), and Thr188 contribute to the substrate site. The Proton donor/acceptor role is filled by His189. Ser319 is an active-site residue. Substrate contacts are provided by residues Ser320 and 325–327 (KVN).

The protein belongs to the class-II fumarase/aspartase family. Fumarase subfamily. In terms of assembly, homotetramer.

The protein localises to the cytoplasm. The catalysed reaction is (S)-malate = fumarate + H2O. It functions in the pathway carbohydrate metabolism; tricarboxylic acid cycle; (S)-malate from fumarate: step 1/1. In terms of biological role, involved in the TCA cycle. Catalyzes the stereospecific interconversion of fumarate to L-malate. This chain is Fumarate hydratase class II, found in Parasynechococcus marenigrum (strain WH8102).